Consider the following 379-residue polypeptide: Sialidase-2 (379 aa).

The FRIP motif motif lies at 20–23 (YRIP). Substrate contacts are provided by Arg-21 and Arg-41. The Proton acceptor role is filled by Asp-46. A BNR 1 repeat occupies 127–138 (ITSTDHGKTWSA). Residues Tyr-179 and Tyr-181 each contribute to the substrate site. A BNR 2 repeat occupies 197–208 (FLSHDHGSTWEL). Substrate contacts are provided by Glu-218, Arg-237, and Arg-303. The active-site Nucleophile is the Tyr-333. Glu-354 is a catalytic residue.

It belongs to the glycosyl hydrolase 33 family.

The protein localises to the cytoplasm. It carries out the reaction Hydrolysis of alpha-(2-&gt;3)-, alpha-(2-&gt;6)-, alpha-(2-&gt;8)- glycosidic linkages of terminal sialic acid residues in oligosaccharides, glycoproteins, glycolipids, colominic acid and synthetic substrates.. In terms of biological role, catalyzes the removal of sialic acid (N-acetylneuraminic acid) moieties from glycoproteins, oligosaccharides and gangliosides. This Cricetulus griseus (Chinese hamster) protein is Sialidase-2 (NEU2).